Consider the following 456-residue polypeptide: Trigger factor (456 aa).

Residues 192–277 (GDTVVIDFVG…IHEVKTKEVP (86 aa)) enclose the PPIase FKBP-type domain.

Belongs to the FKBP-type PPIase family. Tig subfamily.

The protein resides in the cytoplasm. It catalyses the reaction [protein]-peptidylproline (omega=180) = [protein]-peptidylproline (omega=0). Functionally, involved in protein export. Acts as a chaperone by maintaining the newly synthesized protein in an open conformation. Functions as a peptidyl-prolyl cis-trans isomerase. In Streptococcus pyogenes serotype M2 (strain MGAS10270), this protein is Trigger factor.